Here is a 206-residue protein sequence, read N- to C-terminus: Large ribosomal subunit protein uL4 (206 aa).

Residues 45-76 (RQGNQSAKTRAEVSGGGKKPWRQKGTGRARQG) form a disordered region.

This sequence belongs to the universal ribosomal protein uL4 family. In terms of assembly, part of the 50S ribosomal subunit.

Its function is as follows. One of the primary rRNA binding proteins, this protein initially binds near the 5'-end of the 23S rRNA. It is important during the early stages of 50S assembly. It makes multiple contacts with different domains of the 23S rRNA in the assembled 50S subunit and ribosome. Forms part of the polypeptide exit tunnel. This chain is Large ribosomal subunit protein uL4, found in Clostridium novyi (strain NT).